The primary structure comprises 2594 residues: Protein sevenless (2594 aa).

Disordered regions lie at residues 1–34 and 49–92; these read MFWR…PKRL and KMST…RVRR. Residues 1–2141 lie on the Extracellular side of the membrane; sequence MFWREDAAQQ…FVSPEKRGSL (2141 aa). Residues 9 to 26 show a composition bias toward low complexity; sequence QQQQQQQQQQQQQQQQQQ. N-linked (GlcNAc...) asparagine glycans are attached at residues Asn-77, Asn-401, Asn-508, Asn-532, Asn-641, Asn-667, Asn-778, Asn-797, Asn-874, and Asn-980. Fibronectin type-III domains follow at residues 358-462 and 468-560; these read ETTQ…TPME and APII…SPLE. A Fibronectin type-III 3 domain is found at 838 to 938; it reads PPAPRELRAL…APLATRTWPL (101 aa). One copy of the LDL-receptor class B repeat lies at 1024-1066; the sequence is GLLYWTDLARDCVQRLDPFSGERELLPIFGARHLALDSAQGHL. Fibronectin type-III domains lie at 1227 to 1317 and 1324 to 1430; these read LAVP…QLDT and QPRR…VQSV. 12 N-linked (GlcNAc...) asparagine glycosylation sites follow: Asn-1257, Asn-1344, Asn-1382, Asn-1577, Asn-1587, Asn-1665, Asn-1752, Asn-1776, Asn-1824, Asn-1908, Asn-1966, and Asn-2088. Fibronectin type-III domains lie at 1711–1814, 1821–1920, 1922–2010, and 2014–2132; these read TAAA…TLHT, APRN…SYAP, PPLQ…TLGD, and APGR…AEPF. A helical transmembrane segment spans residues 2142–2162; it reads VLAIIAPAAIVSSCVLALVLV. Residues 2163–2594 are Cytoplasmic-facing; it reads RKLQKRRHRA…LYANEGISGL (432 aa). The region spanning 2224 to 2495 is the Protein kinase domain; sequence LTLLRFLGSG…KRCLSTLQAL (272 aa). ATP contacts are provided by residues 2230–2238 and Lys-2257; that span reads LGSGAFGEV. Catalysis depends on Asp-2355, which acts as the Proton acceptor. Tyr-2391 carries the phosphotyrosine; by autocatalysis modification. The segment at 2543–2568 is disordered; it reads TVSTTDADTTGSPTTPTAPTTPTTTT. The segment covering 2545–2568 has biased composition (low complexity); the sequence is STTDADTTGSPTTPTAPTTPTTTT.

It belongs to the protein kinase superfamily. Tyr protein kinase family. Insulin receptor subfamily.

It is found in the cell membrane. The enzyme catalyses L-tyrosyl-[protein] + ATP = O-phospho-L-tyrosyl-[protein] + ADP + H(+). Receptor for an extracellular signal required to instruct a cell to differentiate into a R7 photoreceptor. The ligand for Sev is the Boss (Bride of Sevenless) protein. This Drosophila virilis (Fruit fly) protein is Protein sevenless (sev).